We begin with the raw amino-acid sequence, 214 residues long: MAFFQKLTGQEQVNRDLLLLLCIGGFYALGVSLSNTFVNIYLWKQTGDFRDLALYNLAVVTMQPLTFIVAGRLAKQIDRILVLRLGVSCLAVFFVTVLLVGSRAHQYLLVLGALLGVGYGFYWLAFNVLTFEITEPETRDFFNGFFGVLTSSAGMIGPIAAGYIISSLHGAKGYTFVFLAVARLVSCRCAAQLFLEAPRGRGEIFIFPHFKGTE.

The next 5 membrane-spanning stretches (helical) occupy residues 18–38 (LLLL…NTFV), 51–71 (DLAL…IVAG), 80–100 (ILVL…VLLV), 108–128 (LLVL…AFNV), and 145–165 (FFGV…GYII).

It localises to the cell membrane. This is an uncharacterized protein from Geobacillus stearothermophilus (Bacillus stearothermophilus).